Here is a 629-residue protein sequence, read N- to C-terminus: Arginyl-tRNA--protein transferase 1 (629 aa).

2 disordered regions span residues 274–298 (QNNSNKNSTTTATTATTTTTTTNEP) and 353–405 (PDES…ITKE). A compositionally biased stretch (low complexity) spans 282–295 (TTTATTATTTTTTT). Over residues 356–396 (SYDDYVYDGKDDDDDDDDKDEKEDDEDEDQEDDEDEDDGNN) the composition is skewed to acidic residues.

The protein belongs to the R-transferase family.

The enzyme catalyses an N-terminal L-alpha-aminoacyl-[protein] + L-arginyl-tRNA(Arg) = an N-terminal L-arginyl-L-aminoacyl-[protein] + tRNA(Arg) + H(+). In terms of biological role, involved in the post-translational conjugation of arginine to the N-terminal aspartate or glutamate of a protein. This arginylation is required for degradation of the protein via the ubiquitin pathway. Does not arginylate cysteine residues. This Dictyostelium discoideum (Social amoeba) protein is Arginyl-tRNA--protein transferase 1 (ate1).